A 139-amino-acid chain; its full sequence is MRTLWILAVLLVGVEGSLVQFETMIMKLAKRSGFFWYSFYGCYCGWGGHGLPQDPTDRCCFVHDCCYGKVTNCNPKTATYSYTEENDGIVCGGDDPCKKQVCECDRVAAMCFRDNKDTYDGDKYWKLPPQKCQEDPEPC.

Positions 1-16 are cleaved as a signal peptide; sequence MRTLWILAVLLVGVEG. 7 disulfide bridges follow: Cys42–Cys132, Cys44–Cys60, Cys59–Cys111, Cys65–Cys139, Cys66–Cys104, Cys73–Cys97, and Cys91–Cys102. Residues Tyr43, Gly45, and Gly47 each contribute to the Ca(2+) site. His63 is an active-site residue. A Ca(2+)-binding site is contributed by Asp64. Asp105 is a catalytic residue.

The protein belongs to the phospholipase A2 family. Group II subfamily. D49 sub-subfamily. Homodimer. Ca(2+) serves as cofactor. As to expression, expressed by the venom gland.

The protein localises to the secreted. It carries out the reaction a 1,2-diacyl-sn-glycero-3-phosphocholine + H2O = a 1-acyl-sn-glycero-3-phosphocholine + a fatty acid + H(+). In terms of biological role, snake venom phospholipase A2 (PLA2) that inhibits ADP-induced platelet aggregation. PLA2 catalyzes the calcium-dependent hydrolysis of the 2-acyl groups in 3-sn-phosphoglycerides. This Calloselasma rhodostoma (Malayan pit viper) protein is Acidic phospholipase A2 S1E6-c.